A 1020-amino-acid chain; its full sequence is UPF0182 protein jk1603 (1020 aa).

Residues 1 to 18 (MSTPTPPSSGRPKQPFPS) are compositionally biased toward pro residues. Positions 1–23 (MSTPTPPSSGRPKQPFPSSPGSS) are disordered. The next 7 membrane-spanning stretches (helical) occupy residues 28-48 (ILGI…VVVS), 73-93 (LVLF…AAFL), 125-145 (FLVG…QSNW), 175-195 (LPFL…AFVI), 227-247 (LAVI…FDRY), 272-292 (QIVL…TIVL), and 300-320 (LAVA…PAML). The segment at 924-998 (QEIDGSVVDP…KVNKTRESGT (75 aa)) is disordered. 2 stretches are compositionally biased toward basic and acidic residues: residues 942-961 (KGDK…EQSS) and 969-998 (KSDD…ESGT).

The protein belongs to the UPF0182 family.

It localises to the cell membrane. The polypeptide is UPF0182 protein jk1603 (Corynebacterium jeikeium (strain K411)).